A 218-amino-acid polypeptide reads, in one-letter code: Small ribosomal subunit protein mS34 (218 aa).

Belongs to the mitochondrion-specific ribosomal protein mS34 family. Component of the mitochondrial ribosome small subunit (28S) which comprises a 12S rRNA and about 30 distinct proteins. Widely expressed (at protein liver).

It is found in the mitochondrion. In terms of biological role, required for mitochondrial translation, plays a role in maintaining the stability of the small ribosomal subunit and the 12S rRNA that are required for mitoribosome formation. In Mus musculus (Mouse), this protein is Small ribosomal subunit protein mS34 (Mrps34).